A 438-amino-acid polypeptide reads, in one-letter code: Probable tRNA pseudouridine synthase D (438 aa).

Aspartate 86 functions as the Nucleophile in the catalytic mechanism. Positions 165–390 (GVPNFFGIQR…SKGTRRELLL (226 aa)) constitute a TRUD domain.

It belongs to the pseudouridine synthase TruD family.

It carries out the reaction uridine(13) in tRNA = pseudouridine(13) in tRNA. Could be responsible for synthesis of pseudouridine from uracil-13 in transfer RNAs. This Methanosarcina barkeri (strain Fusaro / DSM 804) protein is Probable tRNA pseudouridine synthase D.